A 715-amino-acid chain; its full sequence is Fatty acid oxidation complex subunit alpha (715 aa).

The segment at 1-190 is enoyl-CoA hydratase; the sequence is MTTTSAFMLN…KAGLVDDVVP (190 aa). The interval 306-714 is 3-hydroxyacyl-CoA dehydrogenase; sequence GPLNSVGILG…FWTNGETDQG (409 aa).

In the N-terminal section; belongs to the enoyl-CoA hydratase/isomerase family. This sequence in the central section; belongs to the 3-hydroxyacyl-CoA dehydrogenase family. As to quaternary structure, heterotetramer of two alpha chains (FadJ) and two beta chains (FadI).

The protein resides in the cytoplasm. The enzyme catalyses a (3S)-3-hydroxyacyl-CoA = a (2E)-enoyl-CoA + H2O. The catalysed reaction is a 4-saturated-(3S)-3-hydroxyacyl-CoA = a (3E)-enoyl-CoA + H2O. It catalyses the reaction a (3S)-3-hydroxyacyl-CoA + NAD(+) = a 3-oxoacyl-CoA + NADH + H(+). It carries out the reaction (3S)-3-hydroxybutanoyl-CoA = (3R)-3-hydroxybutanoyl-CoA. It participates in lipid metabolism; fatty acid beta-oxidation. Functionally, catalyzes the formation of a hydroxyacyl-CoA by addition of water on enoyl-CoA. Also exhibits 3-hydroxyacyl-CoA epimerase and 3-hydroxyacyl-CoA dehydrogenase activities. The chain is Fatty acid oxidation complex subunit alpha from Salmonella typhimurium (strain LT2 / SGSC1412 / ATCC 700720).